The following is a 190-amino-acid chain: MVRVSAIVGAAASVFVCLSAGAYAAEGGDNQSSAVSDRASLFGLLSGGTGQGLGIGESVDLEMMGNTYRVERPTGNPDLLKIAIKASDGSYSEVGNVNVEEVIDTMKSMQRDEDIFLRALNKGETVEEAIEDVAQAEGLNSEQTLQLEDAVSAVASVVQDEMKVIDDVQQLEKDKQQLKDDIGFLTGERE.

An N-terminal signal peptide occupies residues 1–24; it reads MVRVSAIVGAAASVFVCLSAGAYA. The N-linked (GlcNAc...) asparagine glycan is linked to asparagine 30.

The protein resides in the secreted. The protein is Dense granule protein 1 (GRA1) of Toxoplasma gondii.